A 277-amino-acid polypeptide reads, in one-letter code: F420-dependent methylenetetrahydromethanopterin dehydrogenase (277 aa).

This sequence belongs to the MTD family.

The enzyme catalyses 5,10-methylenetetrahydromethanopterin + oxidized coenzyme F420-(gamma-L-Glu)(n) + 2 H(+) = 5,10-methenyl-5,6,7,8-tetrahydromethanopterin + reduced coenzyme F420-(gamma-L-Glu)(n). The protein operates within one-carbon metabolism; methanogenesis from CO(2); 5,10-methylene-5,6,7,8-tetrahydromethanopterin from 5,10-methenyl-5,6,7,8-tetrahydromethanopterin (coenzyme F420 route): step 1/1. Catalyzes the reversible reduction of methenyl-H(4)MPT(+) to methylene-H(4)MPT. This Methanococcus maripaludis (strain C7 / ATCC BAA-1331) protein is F420-dependent methylenetetrahydromethanopterin dehydrogenase.